Here is a 276-residue protein sequence, read N- to C-terminus: Small ribosomal subunit protein uS3 (276 aa).

The region spanning 43 to 111 (IRQLMSTGME…QVQLNILEVK (69 aa)) is the KH type-2 domain. The segment covering 218 to 227 (AQAASAPSRG) has biased composition (low complexity). The segment at 218 to 276 (AQAASAPSRGPRSDRGGRPGGADRGDRRRRNDRPAADAAPAAEAPAVEAAPAAAEGGQA) is disordered. Positions 228–243 (PRSDRGGRPGGADRGD) are enriched in basic and acidic residues. The span at 253–276 (ADAAPAAEAPAVEAAPAAAEGGQA) shows a compositional bias: low complexity.

It belongs to the universal ribosomal protein uS3 family. As to quaternary structure, part of the 30S ribosomal subunit. Forms a tight complex with proteins S10 and S14.

Functionally, binds the lower part of the 30S subunit head. Binds mRNA in the 70S ribosome, positioning it for translation. The polypeptide is Small ribosomal subunit protein uS3 (Pseudarthrobacter chlorophenolicus (strain ATCC 700700 / DSM 12829 / CIP 107037 / JCM 12360 / KCTC 9906 / NCIMB 13794 / A6) (Arthrobacter chlorophenolicus)).